The primary structure comprises 105 residues: MEVSQFDNVSVVKKANLYFDGKCVSHTVLFPDGTRKTLGVIFPASLTFNTGAAEIMEINAGTCRVRLAGSEDWQAYGAGQQFSVPGNSSFDIEVQETLDYVCHFE.

This sequence belongs to the nucleoside phosphorylase PpnP family.

The enzyme catalyses a purine D-ribonucleoside + phosphate = a purine nucleobase + alpha-D-ribose 1-phosphate. It catalyses the reaction adenosine + phosphate = alpha-D-ribose 1-phosphate + adenine. The catalysed reaction is cytidine + phosphate = cytosine + alpha-D-ribose 1-phosphate. It carries out the reaction guanosine + phosphate = alpha-D-ribose 1-phosphate + guanine. The enzyme catalyses inosine + phosphate = alpha-D-ribose 1-phosphate + hypoxanthine. It catalyses the reaction thymidine + phosphate = 2-deoxy-alpha-D-ribose 1-phosphate + thymine. The catalysed reaction is uridine + phosphate = alpha-D-ribose 1-phosphate + uracil. It carries out the reaction xanthosine + phosphate = alpha-D-ribose 1-phosphate + xanthine. Catalyzes the phosphorolysis of diverse nucleosides, yielding D-ribose 1-phosphate and the respective free bases. Can use uridine, adenosine, guanosine, cytidine, thymidine, inosine and xanthosine as substrates. Also catalyzes the reverse reactions. This Cupriavidus taiwanensis (strain DSM 17343 / BCRC 17206 / CCUG 44338 / CIP 107171 / LMG 19424 / R1) (Ralstonia taiwanensis (strain LMG 19424)) protein is Pyrimidine/purine nucleoside phosphorylase.